The chain runs to 375 residues: Succinyl-diaminopimelate desuccinylase (375 aa).

His66 is a binding site for Zn(2+). The active site involves Asp68. Residue Asp99 participates in Zn(2+) binding. Glu133 acts as the Proton acceptor in catalysis. Zn(2+) contacts are provided by Glu134, Glu162, and His348.

Belongs to the peptidase M20A family. DapE subfamily. Homodimer. Zn(2+) is required as a cofactor. It depends on Co(2+) as a cofactor.

The enzyme catalyses N-succinyl-(2S,6S)-2,6-diaminopimelate + H2O = (2S,6S)-2,6-diaminopimelate + succinate. The protein operates within amino-acid biosynthesis; L-lysine biosynthesis via DAP pathway; LL-2,6-diaminopimelate from (S)-tetrahydrodipicolinate (succinylase route): step 3/3. Catalyzes the hydrolysis of N-succinyl-L,L-diaminopimelic acid (SDAP), forming succinate and LL-2,6-diaminopimelate (DAP), an intermediate involved in the bacterial biosynthesis of lysine and meso-diaminopimelic acid, an essential component of bacterial cell walls. This is Succinyl-diaminopimelate desuccinylase from Escherichia coli O6:K15:H31 (strain 536 / UPEC).